Reading from the N-terminus, the 201-residue chain is NADH-quinone oxidoreductase subunit I (201 aa).

4Fe-4S ferredoxin-type domains are found at residues 78–107 (MSYE…RIEA) and 116–147 (KVVR…MTDI). 8 residues coordinate [4Fe-4S] cluster: C87, C90, C93, C97, C127, C130, C133, and C137.

This sequence belongs to the complex I 23 kDa subunit family. As to quaternary structure, NDH-1 is composed of 14 different subunits. Subunits NuoA, H, J, K, L, M, N constitute the membrane sector of the complex. [4Fe-4S] cluster serves as cofactor.

It localises to the cell inner membrane. The enzyme catalyses a quinone + NADH + 5 H(+)(in) = a quinol + NAD(+) + 4 H(+)(out). In terms of biological role, NDH-1 shuttles electrons from NADH, via FMN and iron-sulfur (Fe-S) centers, to quinones in the respiratory chain. The immediate electron acceptor for the enzyme in this species is believed to be ubiquinone. Couples the redox reaction to proton translocation (for every two electrons transferred, four hydrogen ions are translocated across the cytoplasmic membrane), and thus conserves the redox energy in a proton gradient. In Aquifex aeolicus (strain VF5), this protein is NADH-quinone oxidoreductase subunit I.